The chain runs to 1398 residues: Disease resistance protein RPV1 (1398 aa).

The region spanning 22-185 (TTYDVFLSFR…EITNSIFRQL (164 aa)) is the TIR domain. NAD(+) contacts are provided by residues 31–36 (RGEDTR) and G63. Residue E97 is part of the active site. Residues 201–440 (SHVKEMILRL…KRSYDGLDRI (240 aa)) enclose the NB-ARC domain. 24 LRR repeats span residues 203-225 (VKEM…IYGV), 423-447 (KADI…IFLD), 478-504 (LNDL…GWEI), 535-560 (IKSV…VFAK), 610-632 (SYEL…NFDG), 633-657 (GKLV…DLER), 678-702 (MPNL…VGNM), 703-726 (KKLT…IGDL), 728-750 (SLES…GGNM), 751-773 (KSLT…IGDL), 775-797 (SLES…GGNM), 798-820 (KSLT…IGDL), 822-844 (SLEI…GGNM), 845-867 (KSLK…IGDL), 869-891 (SLKY…GGNM), 892-914 (KRLL…IGDL), 916-938 (SLKY…GGNM), 939-961 (KSLT…IGDL), 963-985 (SLEI…GGNM), 986-1008 (KSLK…IGDL), 1010-1032 (SLKY…GGNM), 1033-1055 (KSLL…IGDL), 1079-1102 (MKSL…IGDL), and 1105-1128 (LEML…AIDA). Residues 1315 to 1328 (QNSGDNGSALQDAN) show a composition bias toward polar residues. Positions 1315–1336 (QNSGDNGSALQDANGNVHGANQ) are disordered. An LRR 25 repeat occupies 1346–1369 (LDLLRNLSLGDNGSVVLEDTLGNR). The Nuclear localization signal signature appears at 1369–1373 (RKRRR).

The protein belongs to the disease resistance TIR-NB-LRR family. As to quaternary structure, homodimer; homodimerization is required for NAD(+) hydrolase (NADase) activity.

Its subcellular location is the nucleus. It is found in the cytoplasm. It catalyses the reaction NAD(+) + H2O = ADP-D-ribose + nicotinamide + H(+). Disease resistance (R) protein that confers resistance to multiple powdery and downy mildew by promoting cell death. Acts as a NAD(+) hydrolase (NADase): in response to activation, catalyzes cleavage of NAD(+) into ADP-D-ribose (ADPR) and nicotinamide; NAD(+) cleavage triggering a defense system that promotes cell death. The protein is Disease resistance protein RPV1 of Vitis rotundifolia (Muscadine grape).